The sequence spans 530 residues: Protein SLOW WALKER 1 (530 aa).

WD repeat units follow at residues 50–89, 91–130, 133–173, 176–216, 220–258, 262–304, and 320–363; these read NLVS…SSRR, SFRD…ALRT, SHSA…VISD, GHKD…SNWI, NHGL…KMVC, SHNK…VTYS, and GSTR…DESR. Residues 392–399 carry the Nuclear localization signal motif; sequence EKKGLKLT.

In terms of tissue distribution, expressed in cells undergoing active cell divisions, including functional megaspores and the female gametophytic cells. Accumulates in roots, stems, leaves, inflorescences and siliques.

Its subcellular location is the nucleus. It is found in the nucleolus. In terms of biological role, essential protein required for nuclear division and organization during embryo sac development in female gametophyte, probably by promoting rRNA biogenesis essential for the progression of the mitotic division cycles during gametogenesis. Involved in nucleolar processing of pre-18S ribosomal RNA. The polypeptide is Protein SLOW WALKER 1 (Arabidopsis thaliana (Mouse-ear cress)).